The following is a 321-amino-acid chain: Replication factor C small subunit (321 aa).

An ATP-binding site is contributed by 46–53 (GPAGVGKT).

It belongs to the activator 1 small subunits family. RfcS subfamily. As to quaternary structure, heterohexamer composed of four small subunits (RfcS) and two large subunits (RfcL).

Part of the RFC clamp loader complex which loads the PCNA sliding clamp onto DNA. The complex possesses DNA-dependent ATPase activity which is further stimulated by PCNA. In conjunction with PCNA stimulates DNA synthesis by PolB, relieving inhibition by replication protein A (RPA). This chain is Replication factor C small subunit (rfcS), found in Methanothermobacter thermautotrophicus (strain ATCC 29096 / DSM 1053 / JCM 10044 / NBRC 100330 / Delta H) (Methanobacterium thermoautotrophicum).